Consider the following 432-residue polypeptide: Golgin subfamily A member 6-like protein 9 (432 aa).

Residues 1-11 (MWPQPRLPPHP) show a composition bias toward pro residues. Disordered stretches follow at residues 1–77 (MWPQ…YGEG) and 349–411 (KELE…AGGA). The segment covering 51–62 (NGSSPDTFTSGG) has biased composition (polar residues). Positions 157-354 (SKMEQLQDET…EQQVKELEKS (198 aa)) form a coiled coil. Basic and acidic residues predominate over residues 349–362 (KELEKSGGAEEPRG). Over residues 366–381 (AAAARPVAGAPVPQGA) the composition is skewed to low complexity.

This sequence belongs to the GOLGA6 family.

The polypeptide is Golgin subfamily A member 6-like protein 9 (Homo sapiens (Human)).